Reading from the N-terminus, the 161-residue chain is Endoribonuclease YbeY (161 aa).

Zn(2+) contacts are provided by histidine 121, histidine 125, and histidine 131.

It belongs to the endoribonuclease YbeY family. Requires Zn(2+) as cofactor.

The protein resides in the cytoplasm. In terms of biological role, single strand-specific metallo-endoribonuclease involved in late-stage 70S ribosome quality control and in maturation of the 3' terminus of the 16S rRNA. The polypeptide is Endoribonuclease YbeY (Xanthomonas campestris pv. campestris (strain 8004)).